The chain runs to 325 residues: Elongation factor P--(R)-beta-lysine ligase (325 aa).

76–78 serves as a coordination point for substrate; sequence SPE. ATP-binding positions include 100–102 and Asn109; that span reads RNE. Residue Tyr118 coordinates substrate. 244–245 is a binding site for ATP; the sequence is EL. Glu251 lines the substrate pocket. Gly300 contributes to the ATP binding site.

The protein belongs to the class-II aminoacyl-tRNA synthetase family. EpmA subfamily. As to quaternary structure, homodimer.

It carries out the reaction D-beta-lysine + L-lysyl-[protein] + ATP = N(6)-((3R)-3,6-diaminohexanoyl)-L-lysyl-[protein] + AMP + diphosphate + H(+). Its function is as follows. With EpmB is involved in the beta-lysylation step of the post-translational modification of translation elongation factor P (EF-P) on 'Lys-34'. Catalyzes the ATP-dependent activation of (R)-beta-lysine produced by EpmB, forming a lysyl-adenylate, from which the beta-lysyl moiety is then transferred to the epsilon-amino group of EF-P 'Lys-34'. This chain is Elongation factor P--(R)-beta-lysine ligase, found in Salmonella agona (strain SL483).